A 347-amino-acid polypeptide reads, in one-letter code: Selenide, water dikinase (347 aa).

Residue C17 is part of the active site. Residues K20 and 48 to 50 each bind ATP; that span reads TRD. D51 contacts Mg(2+). ATP is bound by residues D68, D91, and 139–141; that span reads GHS. Residue D91 participates in Mg(2+) binding. D227 is a binding site for Mg(2+).

It belongs to the selenophosphate synthase 1 family. Class I subfamily. As to quaternary structure, homodimer. Requires Mg(2+) as cofactor.

It carries out the reaction hydrogenselenide + ATP + H2O = selenophosphate + AMP + phosphate + 2 H(+). Functionally, synthesizes selenophosphate from selenide and ATP. The chain is Selenide, water dikinase from Escherichia coli O157:H7.